Here is a 606-residue protein sequence, read N- to C-terminus: Transmembrane 9 superfamily member 1 (606 aa).

A signal peptide spans 1–27; the sequence is MTVVGNPRSWSCRWLPILILLLGTGHG. A glycan (N-linked (GlcNAc...) asparagine) is linked at Asn178. The next 4 helical transmembrane spans lie at 237-257, 310-330, 339-359, and 373-393; these read LSIINSMVLVFLLVGFVAVIL, VLGVGAQFLALGTGIIVMALL, GAINSAAILLYALTCCISGYV, and VWNIILTTSLFSVPFFLTWSV. N-linked (GlcNAc...) asparagine glycosylation occurs at Asn401. Transmembrane regions (helical) follow at residues 412–432, 469–489, 499–519, and 535–555; these read ILLLLTVWLLVGFPLTVIGGI, VGGFLPFSAISVELYYIFATV, GILFFVFAILLSVGACISIAL, and SVLSVGSTGLFIFLYSVFYYA. N-linked (GlcNAc...) asparagine glycosylation is present at Asn559. The helical transmembrane segment at 570-590 threads the bilayer; it reads FGYSLLTGYVFFLMLGTISFF.

The protein belongs to the nonaspanin (TM9SF) (TC 9.A.2) family.

Its subcellular location is the lysosome membrane. The protein localises to the cytoplasmic vesicle. It localises to the autophagosome membrane. Functionally, plays an essential role in autophagy. The protein is Transmembrane 9 superfamily member 1 (TM9SF1) of Pongo abelii (Sumatran orangutan).